Here is a 382-residue protein sequence, read N- to C-terminus: uncharacterized protein (382 aa).

12 helical membrane passes run 8–28 (VMLL…LNTL), 45–65 (MVSS…GYLI), 75–95 (YLAS…VGFW), 102–122 (FIAG…LMCS), 131–151 (LLAA…LLVS), 157–177 (LLHV…PLLF), 204–224 (LGVN…GLMP), 231–251 (GMAN…GILG), 270–290 (VQVF…AMAP), 291–311 (ALFI…AWAC), 325–345 (ALLL…AMLM), and 349–369 (SDNL…LMLL).

Belongs to the major facilitator superfamily. YcaD (TC 2.A.1.26) family.

The protein localises to the cell inner membrane. This is an uncharacterized protein from Salmonella dublin (strain CT_02021853).